We begin with the raw amino-acid sequence, 1156 residues long: Reverse gyrase 1 (1156 aa).

An RG N-terminal-type zinc finger spans residues 1 to 38 (MLKVYYTFGCPNCGGPIDDEHLLAGVPCSKCLPGRVEN). 4 residues coordinate Zn(2+): Cys-10, Cys-13, Cys-28, and Cys-31. ATP contacts are provided by residues Gln-86 and 103-110 (APTGLGKT). One can recognise a Helicase ATP-binding domain in the interval 90–277 (IKRLAKSESF…ALRTLIGFEP (188 aa)). Positions 184 to 187 (DDSD) match the DEAD box motif. The tract at residues 570–1156 (INIKTILLIV…VNSLKLDTNV (587 aa)) is topoisomerase I. In terms of domain architecture, Toprim spans 574 to 736 (TILLIVESPT…NIYRIKYHEI (163 aa)). Residue Glu-580 coordinates Mg(2+). The RG C-terminal-type zinc-finger motif lies at 655-682 (IYKCYNCGKTFTIKSNTCPYCGSVFISS). Zn(2+) contacts are provided by Cys-658, Cys-661, Cys-672, and Cys-675. Asp-705 is a binding site for Mg(2+). Positions 752-1143 (NMNLVKSQIV…DLHKEITQIS (392 aa)) constitute a Topo IA-type catalytic domain. The active-site O-(5'-phospho-DNA)-tyrosine intermediate is the Tyr-895.

It in the N-terminal section; belongs to the DEAD box helicase family. DDVD subfamily. In the C-terminal section; belongs to the type IA topoisomerase family. As to quaternary structure, monomer. Requires Zn(2+) as cofactor. Mg(2+) is required as a cofactor.

Its subcellular location is the cytoplasm. The enzyme catalyses ATP + H2O = ADP + phosphate + H(+). Its function is as follows. Modifies the topological state of DNA by introducing positive supercoils in an ATP-dependent process, increasing the linking number in steps of +1. Binds to single-stranded DNA, transiently cleaves and then rejoins the ends, introducing a positive supercoil in the process. The scissile phosphodiester is attacked by the catalytic tyrosine of the enzyme, resulting in the formation of a DNA-(5'-phosphotyrosyl)-enzyme intermediate. Probably involved in rewinding DNA strands in regions of the chromosome that have opened up to allow replication, transcription, DNA repair and/or for DNA protection. This is Reverse gyrase 1 from Sulfurisphaera tokodaii (strain DSM 16993 / JCM 10545 / NBRC 100140 / 7) (Sulfolobus tokodaii).